The primary structure comprises 129 residues: Large ribosomal subunit protein mL53 (129 aa).

A mitochondrion-targeting transit peptide spans 1-50 (MREKLNLLAKLKSVVYKFDPLNPNTRSIRSFIPLTTCKRSRQLAPECSIS).

It belongs to the mitochondrion-specific ribosomal protein mL53 family.

The protein resides in the mitochondrion. The protein is Large ribosomal subunit protein mL53 (mrpl53) of Dictyostelium discoideum (Social amoeba).